The sequence spans 409 residues: Single Ig IL-1-related receptor (409 aa).

The Extracellular segment spans residues 1-117; that stretch reads MAGVCDMAPN…TLWRAGPAGH (117 aa). Positions 9 to 108 constitute an Ig-like C2-type domain; that stretch reads PNFLSPSEDQ…VWNVSSHSFT (100 aa). Asparagine 31, asparagine 58, asparagine 73, asparagine 85, and asparagine 101 each carry an N-linked (GlcNAc...) asparagine glycan. The cysteines at positions 32 and 97 are disulfide-linked. A helical; Signal-anchor for type III membrane protein membrane pass occupies residues 118–138; sequence VAAVLASLLVLVVLLLVALLY. Over 139–409 the chain is Cytoplasmic; sequence VKCRLNMLLW…FYCLVSEDDV (271 aa). In terms of domain architecture, TIR spans 162–306; sequence KLYDAYVSYS…DFWKELQLAL (145 aa). Position 382 is a phosphoserine (serine 382).

Belongs to the interleukin-1 receptor family. In terms of assembly, interacts with IL1R1, IRAK1, TLR4, TLR5, TLR9 and TRAF6. Upon IL-1 stimulation found in a complex at least composed of IL1R1, SIGIRR, MYD88, IRAK1 and TRAF6. Upon stimulation with LPC found in a complex at least composed of TLR4, SIG1IR, MYD88, IRAK1 and TRAF6. Interacts with PALM3. In terms of tissue distribution, expressed at high levels in kidney, and at moderate levels in colon, small intestine, lung, spleen and liver. Not expressed in brain and muscle. Expressed at high levels in epithelial cells, at moderate levels in splenocytes, and at low or undetectable levels in fibroblasts or endothelial cells. Expressed in mucosal and dendritic cells.

Its subcellular location is the membrane. Functionally, acts as a negative regulator of the Toll-like and IL-1R receptor signaling pathways. Attenuates the recruitment of receptor-proximal signaling components to the TLR4 receptor, probably through an TIR-TIR domain interaction with TLR4. Through its extracellular domain interferes with the heterodimerization of Il1R1 and IL1RAP. The protein is Single Ig IL-1-related receptor (Sigirr) of Mus musculus (Mouse).